We begin with the raw amino-acid sequence, 215 residues long: uncharacterized protein (215 aa).

The tract at residues 25–48 (LKSASPGPAPASQQASSFGSAPAQ) is disordered. Positions 27–47 (SASPGPAPASQQASSFGSAPA) are enriched in low complexity.

This is an uncharacterized protein from Homo sapiens (Human).